A 458-amino-acid chain; its full sequence is Histidine--tRNA ligase (458 aa).

Belongs to the class-II aminoacyl-tRNA synthetase family. In terms of assembly, homodimer.

It is found in the cytoplasm. The enzyme catalyses tRNA(His) + L-histidine + ATP = L-histidyl-tRNA(His) + AMP + diphosphate + H(+). The polypeptide is Histidine--tRNA ligase (Micrococcus luteus (strain ATCC 4698 / DSM 20030 / JCM 1464 / CCM 169 / CCUG 5858 / IAM 1056 / NBRC 3333 / NCIMB 9278 / NCTC 2665 / VKM Ac-2230) (Micrococcus lysodeikticus)).